The chain runs to 246 residues: Biosynthetic peptidoglycan transglycosylase (246 aa).

A helical transmembrane segment spans residues 28–48 (FALFLVLFLSSVVLFRFVPVP).

Belongs to the glycosyltransferase 51 family.

It localises to the cell inner membrane. It carries out the reaction [GlcNAc-(1-&gt;4)-Mur2Ac(oyl-L-Ala-gamma-D-Glu-L-Lys-D-Ala-D-Ala)](n)-di-trans,octa-cis-undecaprenyl diphosphate + beta-D-GlcNAc-(1-&gt;4)-Mur2Ac(oyl-L-Ala-gamma-D-Glu-L-Lys-D-Ala-D-Ala)-di-trans,octa-cis-undecaprenyl diphosphate = [GlcNAc-(1-&gt;4)-Mur2Ac(oyl-L-Ala-gamma-D-Glu-L-Lys-D-Ala-D-Ala)](n+1)-di-trans,octa-cis-undecaprenyl diphosphate + di-trans,octa-cis-undecaprenyl diphosphate + H(+). Its pathway is cell wall biogenesis; peptidoglycan biosynthesis. Peptidoglycan polymerase that catalyzes glycan chain elongation from lipid-linked precursors. The protein is Biosynthetic peptidoglycan transglycosylase of Pasteurella multocida (strain Pm70).